Reading from the N-terminus, the 331-residue chain is MTLLEKIKQNKSLSKKDMQSFIVTLFDSNIETNVKVELLKAYTNKDMGQYELTYLVEYFIQTNYPNQPFYNKAMCVCGTGGDQSNSFNISTTVAFVVASAGVPVIKHGNKSITSHSGSTDVLHEMNIKTNKMNEVEQQLNLKGLAFISATDSYPMMKKLQSIRKSIATPTIFNLIGPLINPFKLTYQVMGVYEASQLENIAQTLKDLGRKRAILIHGANGMDEATLSGENIIYEVSSERALKKYSLKAEEVGLAYANNDTLIGGSPQTNKQIALNILSGTDHSSKRDVVLLNAGIALYVAEQVESIKHGVERAKYLIDTGMAMKQYLKMGG.

5-phospho-alpha-D-ribose 1-diphosphate-binding positions include Gly-78, 81–82 (GD), Ser-86, 88–91 (NIST), 106–114 (KHGNKSITS), and Ser-118. Residue Gly-78 participates in anthranilate binding. Ser-90 is a binding site for Mg(2+). Asn-109 contacts anthranilate. Arg-163 serves as a coordination point for anthranilate. Residues Asp-222 and Glu-223 each contribute to the Mg(2+) site.

Belongs to the anthranilate phosphoribosyltransferase family. In terms of assembly, homodimer. Mg(2+) is required as a cofactor.

The enzyme catalyses N-(5-phospho-beta-D-ribosyl)anthranilate + diphosphate = 5-phospho-alpha-D-ribose 1-diphosphate + anthranilate. It functions in the pathway amino-acid biosynthesis; L-tryptophan biosynthesis; L-tryptophan from chorismate: step 2/5. In terms of biological role, catalyzes the transfer of the phosphoribosyl group of 5-phosphorylribose-1-pyrophosphate (PRPP) to anthranilate to yield N-(5'-phosphoribosyl)-anthranilate (PRA). This is Anthranilate phosphoribosyltransferase from Staphylococcus epidermidis (strain ATCC 35984 / DSM 28319 / BCRC 17069 / CCUG 31568 / BM 3577 / RP62A).